The sequence spans 393 residues: Probable protein phosphatase 2C 68 (393 aa).

The region spanning 56-359 is the PPM-type phosphatase domain; that stretch reads DFSIAVVQAN…DDITVVVIFI (304 aa). Residues D87, G88, D291, and D350 each contribute to the Mn(2+) site.

Belongs to the PP2C family. Requires Mg(2+) as cofactor. Mn(2+) serves as cofactor.

The enzyme catalyses O-phospho-L-seryl-[protein] + H2O = L-seryl-[protein] + phosphate. The catalysed reaction is O-phospho-L-threonyl-[protein] + H2O = L-threonyl-[protein] + phosphate. May dephosphorylate and repress plasma membrane H(+)-ATPases (PM H(+)-ATPases, e.g. AHA1 and AHA2), thus influencing negatively plant growth and fitness. This chain is Probable protein phosphatase 2C 68, found in Arabidopsis thaliana (Mouse-ear cress).